A 461-amino-acid polypeptide reads, in one-letter code: Probable tubulin polyglutamylase TTLL9 (461 aa).

Residues 1–10 show a composition bias toward polar residues; the sequence is MSRQKNQNSK. The interval 1–20 is disordered; that stretch reads MSRQKNQNSKGHGVSKGKER. The 381-residue stretch at 22 to 402 folds into the TTL domain; sequence QRTLIRFKTT…EARLTGKEKR (381 aa). ATP-binding positions include K149 and 155-156; that span reads QG. Q155 lines the a protein pocket. The tract at residues 172 to 208 is disordered; that stretch reads RKGTSGKKPTGVETQPARANMNPSGSHDTRSSDDQKD. Residues 198–208 show a composition bias toward basic and acidic residues; sequence HDTRSSDDQKD. ATP is bound by residues 218 to 221 and 231 to 233; these read QRYV and KFD. Position 257 (R257) interacts with L-glutamate. 276 to 277 contacts ATP; it reads TN. An L-glutamate-binding site is contributed by K294. 3 residues coordinate Mg(2+): D348, E361, and N363. L-glutamate is bound at residue K379.

It belongs to the tubulin--tyrosine ligase family. Mg(2+) is required as a cofactor. In terms of tissue distribution, highly expressed in brain and testis. Expressed in heart, kidney and lung. In the brain, expressed in ependymal cilia, cortex, corpus callosum and striatum. In the testis, specifically expressed in the seminiferous tubules.

The protein localises to the cytoplasm. It is found in the cytoskeleton. Its subcellular location is the cilium basal body. The protein resides in the flagellum axoneme. It catalyses the reaction (L-glutamyl)(n)-gamma-L-glutamyl-L-glutamyl-[protein] + L-glutamate + ATP = (L-glutamyl)(n+1)-gamma-L-glutamyl-L-glutamyl-[protein] + ADP + phosphate + H(+). Its function is as follows. Probable tubulin polyglutamylase that generates side chains of glutamate on the gamma-carboxyl group of specific glutamate residues within the C-terminal tail of target proteins. Similar to TTLL1, may acquire enzymatic activity only in complex with other proteins as it is most likely lacking domains important for autonomous activity. Mediates tubulin polyglutamylation which induces establishment of microtubule heterogeneity in sperm flagella, thereby playing a role in normal motile flagella axoneme structure and sperm flagella beating pattern. The chain is Probable tubulin polyglutamylase TTLL9 from Mus musculus (Mouse).